A 309-amino-acid polypeptide reads, in one-letter code: Elongation factor Ts, mitochondrial (309 aa).

Belongs to the EF-Ts family.

It localises to the mitochondrion. Its function is as follows. Associates with the EF-Tu.GDP complex and induces the exchange of GDP to GTP. It remains bound to the aminoacyl-tRNA.EF-Tu.GTP complex up to the GTP hydrolysis stage on the ribosome. This chain is Elongation factor Ts, mitochondrial (tsfm), found in Salmo salar (Atlantic salmon).